A 229-amino-acid polypeptide reads, in one-letter code: Thiamine import ATP-binding protein ThiQ (229 aa).

One can recognise an ABC transporter domain in the interval 2 to 229; that stretch reads LHLENIRVRQ…NNAEPLRPWM (228 aa). Position 32 to 39 (32 to 39) interacts with ATP; sequence GASGSGKS.

Belongs to the ABC transporter superfamily. Thiamine importer (TC 3.A.1.19.1) family. As to quaternary structure, the complex is composed of two ATP-binding proteins (ThiQ), two transmembrane proteins (ThiP) and a solute-binding protein (ThiB).

The protein localises to the cell inner membrane. The enzyme catalyses thiamine(out) + ATP + H2O = thiamine(in) + ADP + phosphate + H(+). Its function is as follows. Part of the ABC transporter complex ThiBPQ involved in thiamine import. Responsible for energy coupling to the transport system. The chain is Thiamine import ATP-binding protein ThiQ from Jannaschia sp. (strain CCS1).